Here is a 489-residue protein sequence, read N- to C-terminus: Glutamate--tRNA ligase (489 aa).

A 'HIGH' region motif is present at residues 11-21 (PSPTGHLHIGN). The 'KMSKS' region signature appears at 252–256 (KLSKR). Lys255 is an ATP binding site.

The protein belongs to the class-I aminoacyl-tRNA synthetase family. Glutamate--tRNA ligase type 1 subfamily. In terms of assembly, monomer.

It localises to the cytoplasm. The catalysed reaction is tRNA(Glu) + L-glutamate + ATP = L-glutamyl-tRNA(Glu) + AMP + diphosphate. Functionally, catalyzes the attachment of glutamate to tRNA(Glu) in a two-step reaction: glutamate is first activated by ATP to form Glu-AMP and then transferred to the acceptor end of tRNA(Glu). The polypeptide is Glutamate--tRNA ligase (Oceanobacillus iheyensis (strain DSM 14371 / CIP 107618 / JCM 11309 / KCTC 3954 / HTE831)).